The following is a 314-amino-acid chain: Serine hydrolase-like protein 2 (314 aa).

Residues 33–293 (PPVLCLHGWL…GNHCVHMSEP (261 aa)) form the AB hydrolase-1 domain. Ser-108 is a catalytic residue.

It belongs to the AB hydrolase superfamily.

The protein resides in the cytoplasm. It is found in the perinuclear region. It localises to the peroxisome. Its function is as follows. Probable serine hydrolase. May be related to cell muscle hypertrophy. The polypeptide is Serine hydrolase-like protein 2 (SERHL2) (Homo sapiens (Human)).